The chain runs to 1041 residues: Isoleucine--tRNA ligase (1041 aa).

A 'HIGH' region motif is present at residues P53–H63. A 'KMSKS' region motif is present at residues K619–S623. K622 is a binding site for ATP.

The protein belongs to the class-I aminoacyl-tRNA synthetase family. IleS type 2 subfamily. Monomer. Requires Zn(2+) as cofactor.

Its subcellular location is the cytoplasm. The catalysed reaction is tRNA(Ile) + L-isoleucine + ATP = L-isoleucyl-tRNA(Ile) + AMP + diphosphate. Its function is as follows. Catalyzes the attachment of isoleucine to tRNA(Ile). As IleRS can inadvertently accommodate and process structurally similar amino acids such as valine, to avoid such errors it has two additional distinct tRNA(Ile)-dependent editing activities. One activity is designated as 'pretransfer' editing and involves the hydrolysis of activated Val-AMP. The other activity is designated 'posttransfer' editing and involves deacylation of mischarged Val-tRNA(Ile). The polypeptide is Isoleucine--tRNA ligase (ileS) (Mycobacterium tuberculosis (strain CDC 1551 / Oshkosh)).